Here is a 201-residue protein sequence, read N- to C-terminus: 3-isopropylmalate dehydratase small subunit (201 aa).

It belongs to the LeuD family. LeuD type 1 subfamily. Heterodimer of LeuC and LeuD.

The enzyme catalyses (2R,3S)-3-isopropylmalate = (2S)-2-isopropylmalate. The protein operates within amino-acid biosynthesis; L-leucine biosynthesis; L-leucine from 3-methyl-2-oxobutanoate: step 2/4. Its function is as follows. Catalyzes the isomerization between 2-isopropylmalate and 3-isopropylmalate, via the formation of 2-isopropylmaleate. This is 3-isopropylmalate dehydratase small subunit from Enterobacter sp. (strain 638).